Reading from the N-terminus, the 202-residue chain is Ribosome maturation factor RimM (202 aa).

A PRC barrel domain is found at 100 to 195 (ADEWYPKDLI…YLTLDPPGGL (96 aa)).

It belongs to the RimM family. Binds ribosomal protein uS19.

The protein resides in the cytoplasm. Functionally, an accessory protein needed during the final step in the assembly of 30S ribosomal subunit, possibly for assembly of the head region. Essential for efficient processing of 16S rRNA. May be needed both before and after RbfA during the maturation of 16S rRNA. It has affinity for free ribosomal 30S subunits but not for 70S ribosomes. In Bifidobacterium longum (strain NCC 2705), this protein is Ribosome maturation factor RimM.